The following is a 287-amino-acid chain: Large ribosomal subunit protein uL3 (287 aa).

The interval 228–287 (KAPEAKPAKLSKKKQAKELAKAQAANQQTVEAKVDTPVVEPKPTEVKKAAPVVEKKGEDK) is disordered. The segment covering 269-287 (KPTEVKKAAPVVEKKGEDK) has biased composition (basic and acidic residues).

Belongs to the universal ribosomal protein uL3 family. Part of the 50S ribosomal subunit. Forms a cluster with proteins L14 and L19.

Its function is as follows. One of the primary rRNA binding proteins, it binds directly near the 3'-end of the 23S rRNA, where it nucleates assembly of the 50S subunit. The chain is Large ribosomal subunit protein uL3 from Mycoplasma pneumoniae (strain ATCC 29342 / M129 / Subtype 1) (Mycoplasmoides pneumoniae).